Here is an 80-residue protein sequence, read N- to C-terminus: Probable Rubredoxin-1 (80 aa).

The Rubredoxin-like domain maps to 19 to 72 (YRKYKCKVCGWVYDPLKGDPSQNIPPKTPFEELPDTWICPVCRGKVGKESFEPL). 4 residues coordinate Fe cation: Cys24, Cys27, Cys57, and Cys60.

Belongs to the rubredoxin family. Fe(3+) is required as a cofactor.

In terms of biological role, rubredoxin is a small nonheme, iron protein lacking acid-labile sulfide. Its single Fe, chelated to 4 Cys, functions as an electron acceptor and may also stabilize the conformation of the molecule. This chain is Probable Rubredoxin-1, found in Methanocaldococcus jannaschii (strain ATCC 43067 / DSM 2661 / JAL-1 / JCM 10045 / NBRC 100440) (Methanococcus jannaschii).